The following is a 339-amino-acid chain: Methylglutaconyl-CoA hydratase, mitochondrial (339 aa).

A mitochondrion-targeting transit peptide spans 1–67; that stretch reads MAAAVAAAPG…AGGPAPKRGY (67 aa). At Lys-100 the chain carries N6-acetyllysine; alternate. Lys-100 carries the post-translational modification N6-succinyllysine; alternate. Residues 105 to 119 are RNA-binding; that stretch reads KNLIKMLSKAVDALK. Position 109 is an N6-succinyllysine (Lys-109). N6-acetyllysine; alternate is present on residues Lys-113 and Lys-144. N6-succinyllysine; alternate occurs at positions 113 and 144. 2 positions are modified to N6-succinyllysine: Lys-148 and Lys-160. N6-acetyllysine; alternate is present on residues Lys-204 and Lys-211. N6-succinyllysine; alternate occurs at positions 204 and 211. An N6-succinyllysine modification is found at Lys-329.

This sequence belongs to the enoyl-CoA hydratase/isomerase family. As to quaternary structure, homohexamer.

The protein localises to the mitochondrion. The enzyme catalyses (3S)-3-hydroxy-3-methylglutaryl-CoA = 3-methyl-(2E)-glutaconyl-CoA + H2O. It catalyses the reaction (3S)-citramalyl-CoA = itaconyl-CoA + H2O. It carries out the reaction 3-hydroxyisovaleryl-CoA = 3-methylbut-2-enoyl-CoA + H2O. The catalysed reaction is (S)-3-hydroxyglutaryl-CoA = (2E)-glutaconyl-CoA + H2O. The protein operates within amino-acid degradation; L-leucine degradation; (S)-3-hydroxy-3-methylglutaryl-CoA from 3-isovaleryl-CoA: step 3/3. Catalyzes the fifth step in the leucine degradation pathway, the reversible hydration of 3-methylglutaconyl-CoA (3-MG-CoA) to 3-hydroxy-3-methylglutaryl-CoA (HMG-CoA). Can catalyze the reverse reaction but at a much lower rate in vitro. HMG-CoA is then quickly degraded by another enzyme (such as HMG-CoA lyase) to give acetyl-CoA and acetoacetate. Uses other substrates such as (2E)-glutaconyl-CoA efficiently in vitro, and to a lesser extent 3-methylcrotonyl-CoA (3-methyl-(2E)-butenoyl-CoA), crotonyl-CoA ((2E)-butenoyl-CoA) and 3-hydroxybutanoyl-CoA (the missing carboxylate reduces affinity to the active site). Originally it was identified as an RNA-binding protein as it binds to AU-rich elements (AREs) in vitro. AREs direct rapid RNA degradation and mRNA deadenylation. Might have itaconyl-CoA hydratase activity, converting itaconyl-CoA into citramalyl-CoA in the C5-dicarboxylate catabolism pathway. The C5-dicarboxylate catabolism pathway is required to detoxify itaconate, an antimicrobial metabolite and immunomodulator produced by macrophages during certain infections, that can act as a vitamin B12-poisoning metabolite. This chain is Methylglutaconyl-CoA hydratase, mitochondrial (AUH), found in Homo sapiens (Human).